We begin with the raw amino-acid sequence, 944 residues long: Weak acid resistance protein 1 (944 aa).

Positions 76–109 form a DNA-binding region, zn(2)-C6 fungal-type; the sequence is CVCCHSLKQKCEPSDVNDIYRKPCRRCLKHKKLC. 2 disordered regions span residues 114–171 and 197–225; these read SKRT…AKQF and SYGA…SVPT. Thr128 is subject to Phosphothreonine. Polar residues-rich tracts occupy residues 135-144 and 205-225; these read VNVSTKSKGP and TTST…SVPT.

Homodimer. Post-translationally, phosphorylation is required for PDR12 induction.

Its subcellular location is the nucleus. Its function is as follows. transcription factor which binds to a weak acid response element (WARE) to mediate stress induction of PDR12 and FUN34, encoding an acid transporter and a putative ammonia transporter, respectively. This is Weak acid resistance protein 1 (WAR1) from Saccharomyces cerevisiae (strain ATCC 204508 / S288c) (Baker's yeast).